Consider the following 239-residue polypeptide: Putative transcriptional regulator of 2-aminoethylphosphonate degradation operons (239 aa).

Positions 8–76 (IPQYLLIKAQ…DRRGWFVTPE (69 aa)) constitute an HTH gntR-type domain. The segment at residues 36–55 (ERELCAIFNTTRITIRESLA) is a DNA-binding region (H-T-H motif).

The protein is Putative transcriptional regulator of 2-aminoethylphosphonate degradation operons (phnR) of Salmonella typhi.